The following is a 113-amino-acid chain: Hydrogenase maturation factor HybF (113 aa).

Residues His2 and Glu3 each contribute to the Ni(2+) site. The Zn(2+) site is built by Cys73, Cys76, Cys89, and Cys92.

It belongs to the HypA/HybF family. HybF subfamily.

In terms of biological role, involved in the maturation of [NiFe] hydrogenases. Required for nickel insertion into the metal center of the hydrogenase. This chain is Hydrogenase maturation factor HybF, found in Salmonella typhi.